Reading from the N-terminus, the 975-residue chain is MSAEREIPAEDSIKVVCRFRPLNDSEEKAGSKFVVKFPNNVEENCISIAGKVYLFDKVFKPNASQEKVYNEAAKSIVTDVLAGYNGTIFAYGQTSSGKTHTMEGVIGDSVKQGIIPRIVNDIFNHIYAMEVNLEFHIKVSYYEIYMDKIRDLLDVSKVNLSVHEDKNRVPYVKGATERFVSSPEDVFEVIEEGKSNRHIAVTNMNEHSSRSHSVFLINVKQENLENQKKLSGKLYLVDLAGSEKVSKTGAEGTVLDEAKNINKSLSALGNVISALADGNKTHIPYRDSKLTRILQESLGGNARTTIVICCSPASFNESETKSTLDFGRRAKTVKNVVCVNEELTAEEWKRRYEKEKEKNARLKGKVEKLEIELARWRAGETVKAEEQINMEDLMEASTPNLEVEAAQTAAAEAALAAQRTALANMSASVAVNEQARLATECERLYQQLDDKDEEINQQSQYAEQLKEQVMEQEELIANARREYETLQSEMARIQQENESAKEEVKEVLQALEELAVNYDQKSQEIDNKNKDIDALNEELQQKQSVFNAASTELQQLKDMSSHQKKRITEMLTNLLRDLGEVGQAIAPGESSIDLKMSALAGTDASKVEEDFTMARLFISKMKTEAKNIAQRCSNMETQQADSNKKISEYEKDLGEYRLLISQHEARMKSLQESMREAENKKRTLEEQIDSLREECAKLKAAEHVSAVNAEEKQRAEELRSMFDSQMDELREAHTRQVSELRDEIAAKQHEMDEMKDVHQKLLLAHQQMTADYEKVRQEDAEKSSELQNIILTNERREQARKDLKGLEDTVAKELQTLHNLRKLFVQDLQQRIRKNVVNEESEEDGGSLAQKQKISFLENNLDQLTKVHKQLVRDNADLRCELPKLEKRLRCTMERVKALETALKEAKEGAMRDRKRYQYEVDRIKEAVRQKHLGRRGPQAQIAKPIRSGQGAIAIRGGGAVGGPSPLAQVNPVNS.

The Kinesin motor domain occupies 12 to 333 (SIKVVCRFRP…LDFGRRAKTV (322 aa)). Residue 92–99 (GQTSSGKT) coordinates ATP. Positions 180-321 (VSSPEDVFEV…PASFNESETK (142 aa)) are microtubule-binding. Positions 335–931 (NVVCVNEELT…DRIKEAVRQK (597 aa)) form a coiled coil. A necessary for associating with milt region spans residues 810 to 891 (VAKELQTLHN…LPKLEKRLRC (82 aa)). Residues 932-975 (HLGRRGPQAQIAKPIRSGQGAIAIRGGGAVGGPSPLAQVNPVNS) form a globular region.

It belongs to the TRAFAC class myosin-kinesin ATPase superfamily. Kinesin family. Kinesin subfamily. Oligomer composed of two heavy chains and two light chains.

It localises to the cytoplasm. Its subcellular location is the cytoskeleton. Its function is as follows. Kinesin is a microtubule-associated force-producing protein that may play a role in organelle transport. Milt and Miro form an essential protein complex that links Khc to mitochondria for light chain-independent, anterograde transport of mitochondria. The sequence is that of Kinesin heavy chain (Khc) from Drosophila melanogaster (Fruit fly).